Consider the following 213-residue polypeptide: Thymidylate kinase (213 aa).

Position 10–17 (10–17 (GLEGAGKT)) interacts with ATP.

This sequence belongs to the thymidylate kinase family.

It carries out the reaction dTMP + ATP = dTDP + ADP. In terms of biological role, phosphorylation of dTMP to form dTDP in both de novo and salvage pathways of dTTP synthesis. The chain is Thymidylate kinase from Escherichia coli O157:H7 (strain EC4115 / EHEC).